A 309-amino-acid chain; its full sequence is Glutaminase (309 aa).

Serine 64, asparagine 114, glutamate 160, asparagine 167, tyrosine 191, tyrosine 243, and valine 261 together coordinate substrate.

Belongs to the glutaminase family. Homotetramer.

The catalysed reaction is L-glutamine + H2O = L-glutamate + NH4(+). The polypeptide is Glutaminase (Rhizobium etli (strain CIAT 652)).